The sequence spans 328 residues: MIFSILEHILTHISFSVISIVLTIYFLTLLVNLDEIIGFFDSSDKGIVITFFGITGLLFTRWIYSGHFPLSNLYESLIFLSWAFSIIHMVSYFNKKKKNHLNAITAPSAIFIQGFATSGLLNKMPQSAILVPALQSQWLMMHVSMMILGYGALLCGSLLSMALLVITFRKVGPTFLQKNIKKKFLLTELFSFDVFYSINEKNAILLQQNINFSFSRNYYRYQLIEQLDYWSFRIISLGFIFLTVGILSGAVWANETWGSYWNWDPKETWAFITWTIFAIYLHIKTNRNVRSINSAIVASIGFILIWICYFGVNLLGIGLHSYGSFTSN.

The next 8 helical transmembrane spans lie at isoleucine 13–leucine 33, glycine 46–glycine 66, leucine 73–phenylalanine 93, leucine 101–leucine 121, methionine 146–isoleucine 166, isoleucine 234–asparagine 254, tryptophan 263–isoleucine 283, and alanine 295–leucine 315.

Belongs to the CcmF/CycK/Ccl1/NrfE/CcsA family. May interact with Ccs1.

Its subcellular location is the plastid. The protein localises to the chloroplast thylakoid membrane. Its function is as follows. Required during biogenesis of c-type cytochromes (cytochrome c6 and cytochrome f) at the step of heme attachment. In Nasturtium officinale (Watercress), this protein is Cytochrome c biogenesis protein CcsA.